Reading from the N-terminus, the 364-residue chain is Aminomethyltransferase (364 aa).

This sequence belongs to the GcvT family. In terms of assembly, the glycine cleavage system is composed of four proteins: P, T, L and H.

The enzyme catalyses N(6)-[(R)-S(8)-aminomethyldihydrolipoyl]-L-lysyl-[protein] + (6S)-5,6,7,8-tetrahydrofolate = N(6)-[(R)-dihydrolipoyl]-L-lysyl-[protein] + (6R)-5,10-methylene-5,6,7,8-tetrahydrofolate + NH4(+). In terms of biological role, the glycine cleavage system catalyzes the degradation of glycine. This chain is Aminomethyltransferase, found in Escherichia coli (strain SMS-3-5 / SECEC).